Reading from the N-terminus, the 60-residue chain is Antitoxin Dmd (60 aa).

Can form a complex with non-cognate host toxins LsoA and RnlA.

Functionally, antitoxin component of a potential type II toxin-antitoxin (TA) system. Acts as an antitoxin against host toxins RnlA and LsoA, preventing them from degrading T4 bacteriophage-derived mRNA and thus permitting successful virus infection. Stabilizes middle (8-10 minutes) and late (18 to 28 minutes) T4 gene transcripts. In Escherichia coli (Bacteriophage T4), this protein is Antitoxin Dmd (dmd).